The primary structure comprises 132 residues: Small ribosomal subunit protein uS8 (132 aa).

This sequence belongs to the universal ribosomal protein uS8 family. As to quaternary structure, part of the 30S ribosomal subunit. Contacts proteins S5 and S12.

In terms of biological role, one of the primary rRNA binding proteins, it binds directly to 16S rRNA central domain where it helps coordinate assembly of the platform of the 30S subunit. This is Small ribosomal subunit protein uS8 from Caulobacter sp. (strain K31).